The sequence spans 697 residues: Methionine--tRNA ligase (697 aa).

The 'HIGH' region motif lies at 11 to 21; that stretch reads PYANGPIHLGH. Positions 142, 145, 155, and 158 each coordinate Zn(2+). Positions 343–347 match the 'KMSKS' region motif; sequence KMSKS. Lysine 346 is an ATP binding site. The tRNA-binding domain maps to 595–697; sequence DFMKVEMTVA…DECKVGDKLA (103 aa).

This sequence belongs to the class-I aminoacyl-tRNA synthetase family. MetG type 1 subfamily. Homodimer. Zn(2+) serves as cofactor.

It is found in the cytoplasm. The enzyme catalyses tRNA(Met) + L-methionine + ATP = L-methionyl-tRNA(Met) + AMP + diphosphate. Its function is as follows. Is required not only for elongation of protein synthesis but also for the initiation of all mRNA translation through initiator tRNA(fMet) aminoacylation. This Psychrobacter sp. (strain PRwf-1) protein is Methionine--tRNA ligase.